A 301-amino-acid polypeptide reads, in one-letter code: MLRLRCKAKNGTHLMQGLTHQSCVQELKDKIEELTGIPCDVQKIMVGYPPSSLDLRNGEAHLKDYPIKSGDTLIVEEEKNKPKPPVQPTVTKGPSFEVTPVVERRVVPADNSCLFTSVNYVMEGGVYDPACASEMRGLIAQIVASDPTAYSEAVLGKTNEEYCTWIRRDDTWGGAIEVSILSKFYQCEICVVDTQTVRVDRFGEDAGYTKRVLLIYDGIHYDPLQKVLPGSDVPAQTVFSTVDDVILAQALELADEARRKRQFTDVNRFALRCMVCQTGLVGQKEAREHAKETGHTNFGEV.

A UBX-like region spans residues 5–83 (RCKAKNGTHL…IVEEEKNKPK (79 aa)). The OTU domain maps to 102–227 (VERRVVPADN…GIHYDPLQKV (126 aa)). Residues 107-113 (VPADNSC) form a cys-loop region. Asp-110 is a catalytic residue. Residue Cys-113 is the Nucleophile of the active site. The interval 166 to 176 (IRRDDTWGGAI) is variable-loop. Positions 216 to 220 (YDGIH) are his-loop. Residue Ile-219 coordinates substrate. His-220 is a catalytic residue. Residues 244-249 (DVILAQ) are S2 site. The segment at 271-295 (LRCMVCQTGLVGQKEAREHAKETGH) adopts a C2H2-type zinc-finger fold. The active site involves His-295.

The protein resides in the cytoplasm. It carries out the reaction Thiol-dependent hydrolysis of ester, thioester, amide, peptide and isopeptide bonds formed by the C-terminal Gly of ubiquitin (a 76-residue protein attached to proteins as an intracellular targeting signal).. In terms of biological role, hydrolase that can remove conjugated ubiquitin from proteins and participates in endoplasmic reticulum-associated degradation (ERAD) for misfolded lumenal proteins. May act by triming the ubiquitin chain on the associated substrate to facilitate their threading through the VCP/p97 pore. Ubiquitin moieties on substrates may present a steric impediment to the threading process when the substrate is transferred to the VCP pore and threaded through VCP's axial channel. Mediates deubiquitination of 'Lys-27'-, 'Lys-29'- and 'Lys-33'-linked polyubiquitin chains. Also able to hydrolyze 'Lys-11'-linked ubiquitin chains. Cleaves both polyubiquitin and di-ubiquitin. In Danio rerio (Zebrafish), this protein is Ubiquitin thioesterase OTU1 (yod1).